Here is a 67-residue protein sequence, read N- to C-terminus: VIIIAVLFLTACQLIATASYARSERKHPDLRLSSRNSKLSKRCLGSREQCVRDTSCCSMSCTNNICF.

Positions 1–17 are cleaved as a signal peptide; that stretch reads VIIIAVLFLTACQLIAT. Positions 18–40 are excised as a propeptide; that stretch reads ASYARSERKHPDLRLSSRNSKLS. Intrachain disulfides connect Cys-43/Cys-57, Cys-50/Cys-61, and Cys-56/Cys-66.

It belongs to the conotoxin O1 superfamily. In terms of tissue distribution, expressed by the venom duct.

Its subcellular location is the secreted. The sequence is that of Conotoxin AbVIN from Conus abbreviatus (Abbreviated cone).